Here is a 246-residue protein sequence, read N- to C-terminus: Large ribosomal subunit protein uL30 (246 aa).

It belongs to the universal ribosomal protein uL30 family.

In terms of biological role, binds to G-rich structures in 28S rRNA and in mRNAs. Plays a regulatory role in the translation apparatus; inhibits cell-free translation of mRNAs. The chain is Large ribosomal subunit protein uL30 (rpl7) from Dictyostelium discoideum (Social amoeba).